A 533-amino-acid polypeptide reads, in one-letter code: Peptide chain release factor 3 (533 aa).

Residues 9 to 284 (ARRRTFAIIS…ALCQLSPPPL (276 aa)) enclose the tr-type G domain. GTP is bound by residues 18 to 25 (SHPDAGKT), 95 to 99 (DTPGH), and 149 to 152 (NKLD).

It belongs to the TRAFAC class translation factor GTPase superfamily. Classic translation factor GTPase family. PrfC subfamily.

It localises to the cytoplasm. Functionally, increases the formation of ribosomal termination complexes and stimulates activities of RF-1 and RF-2. It binds guanine nucleotides and has strong preference for UGA stop codons. It may interact directly with the ribosome. The stimulation of RF-1 and RF-2 is significantly reduced by GTP and GDP, but not by GMP. This chain is Peptide chain release factor 3, found in Cupriavidus pinatubonensis (strain JMP 134 / LMG 1197) (Cupriavidus necator (strain JMP 134)).